The sequence spans 422 residues: Tyrosine--tRNA ligase (422 aa).

Tyr-35 lines the L-tyrosine pocket. A 'HIGH' region motif is present at residues 40-49 (PTAASLHVGH). Residues Tyr-169 and Gln-173 each coordinate L-tyrosine. The 'KMSKS' region signature appears at 229–233 (KFGKT). Residue Lys-232 coordinates ATP. Positions 352–418 (VRLAQLFADT…GKKSLASVAV (67 aa)) constitute an S4 RNA-binding domain.

This sequence belongs to the class-I aminoacyl-tRNA synthetase family. TyrS type 1 subfamily. Homodimer.

The protein localises to the cytoplasm. The catalysed reaction is tRNA(Tyr) + L-tyrosine + ATP = L-tyrosyl-tRNA(Tyr) + AMP + diphosphate + H(+). In terms of biological role, catalyzes the attachment of tyrosine to tRNA(Tyr) in a two-step reaction: tyrosine is first activated by ATP to form Tyr-AMP and then transferred to the acceptor end of tRNA(Tyr). This chain is Tyrosine--tRNA ligase, found in Kineococcus radiotolerans (strain ATCC BAA-149 / DSM 14245 / SRS30216).